The chain runs to 213 residues: Cytochrome c biogenesis ATP-binding export protein CcmA (213 aa).

Residues 11 to 213 enclose the ABC transporter domain; that stretch reads LTARNLECIR…TVTVHHLVLS (203 aa). 43–50 provides a ligand contact to ATP; it reads GPNGSGKT.

The protein belongs to the ABC transporter superfamily. CcmA exporter (TC 3.A.1.107) family. The complex is composed of two ATP-binding proteins (CcmA) and two transmembrane proteins (CcmB).

The protein localises to the cell inner membrane. It carries out the reaction heme b(in) + ATP + H2O = heme b(out) + ADP + phosphate + H(+). In terms of biological role, part of the ABC transporter complex CcmAB involved in the biogenesis of c-type cytochromes; once thought to export heme, this seems not to be the case, but its exact role is uncertain. Responsible for energy coupling to the transport system. The polypeptide is Cytochrome c biogenesis ATP-binding export protein CcmA (Nitrosomonas europaea (strain ATCC 19718 / CIP 103999 / KCTC 2705 / NBRC 14298)).